The primary structure comprises 307 residues: Nodulation protein NoeC (307 aa).

Transmembrane regions (helical) follow at residues 46–66, 91–111, 117–137, 140–160, 163–183, 212–232, 238–258, and 279–299; these read APLW…YVLN, SGLT…VCAI, LFAI…KVRG, VLDL…GATA, IPVP…LASI, IVAL…ELFV, AQGP…AYWI, and VTDG…VFLM.

It localises to the cell membrane. This chain is Nodulation protein NoeC (noeC), found in Azorhizobium caulinodans (strain ATCC 43989 / DSM 5975 / JCM 20966 / LMG 6465 / NBRC 14845 / NCIMB 13405 / ORS 571).